The chain runs to 67 residues: uncharacterized protein (67 aa).

The protein to E.coli YbdD.

This is an uncharacterized protein from Escherichia coli O157:H7.